The sequence spans 473 residues: Beta-secretase 1 (473 aa).

The N-terminal stretch at 1 to 21 (MAPALPWLLLWVGSGVLPVHG) is a signal peptide. Residues 22–45 (TQDGIRLPLRSGLAGAPLGLRLPR) constitute a propeptide that is removed on maturation. Residues 22-429 (TQDGIRLPLR…PQTDESTLMT (408 aa)) lie on the Extracellular side of the membrane. Positions 72 to 388 (YYVEMTVGSP…DRARKRIGFA (317 aa)) constitute a Peptidase A1 domain. Residue Asp90 is part of the active site. Lys123 is modified (N6-acetyllysine). 3 N-linked (GlcNAc...) asparagine glycosylation sites follow: Asn150, Asn169, and Asn195. Intrachain disulfides connect Cys188/Cys392, Cys250/Cys415, and Cys302/Cys352. 3 positions are modified to N6-acetyllysine: Lys247, Lys251, and Lys257. Asp261 is an active-site residue. An N6-acetyllysine mark is found at Lys271, Lys272, and Lys279. Residue Asn326 is glycosylated (N-linked (GlcNAc...) asparagine). A helical membrane pass occupies residues 430–450 (IAYVMAAICALFMLPLCLMVC). 4 S-palmitoyl cysteine lipidation sites follow: Cys446, Cys450, Cys454, and Cys457. Residues 451-473 (QWRCLRCLRHQHDDFADDISLLK) lie on the Cytoplasmic side of the membrane. The segment at 451–473 (QWRCLRCLRHQHDDFADDISLLK) is interaction with RTN3. A DXXLL motif is present at residues 468–472 (DISLL). Residue Ser470 is modified to Phosphoserine. Lys473 is covalently cross-linked (Glycyl lysine isopeptide (Lys-Gly) (interchain with G-Cter in ubiquitin)).

This sequence belongs to the peptidase A1 family. Monomer. Interacts (via DXXLL motif) with GGA1, GGA2 and GGA3 (via their VHS domain); the interaction highly increases when BACE1 is phosphorylated at Ser-470. Interacts with RTN1; RTN2; RTN3 and RTN4; the interaction leads to inhibition of amyloid precursor protein processing. Interacts with SNX6. Interacts with PCSK9. Interacts with NAT8 and NAT8B. Interacts with BIN1. Interacts (via extracellular domain) with ADAM10 (via extracellular domain). Interacts with SORL1; this interaction may affect binding with APP and hence reduce APP cleavage. Interacts with NRDC AND NRG1. In terms of processing, palmitoylation mediates lipid raft localization. Post-translationally, acetylated in the endoplasmic reticulum at Lys-123, Lys-247, Lys-251, Lys-257, Lys-271, Lys-272, and Lys-279. Acetylation by NAT8 and NAT8B is transient and deacetylation probably occurs in the Golgi. Acetylation regulates the maturation, the transport to the plasma membrane, the stability and the expression of the protein. Ubiquitinated at Lys-473, ubiquitination leads to lysosomal degradation. Monoubiquitinated and 'Lys-63'-linked polyubitinated. Deubiquitnated by USP8; inhibits lysosomal degradation. In terms of processing, phosphorylation at Ser-470 is required for interaction with GGA1 and retrograded transport from endosomal compartments to the trans-Golgi network. Non-phosphorylated BACE1 enters a direct recycling route to the cell surface. Post-translationally, N-Glycosylated. Addition of a bisecting N-acetylglucosamine by MGAT3 blocks lysosomal targeting, further degradation and is required for maintaining stability under stress conditions.

The protein localises to the cell membrane. The protein resides in the golgi apparatus. It is found in the trans-Golgi network. Its subcellular location is the endoplasmic reticulum. It localises to the endosome. The protein localises to the cell surface. The protein resides in the cytoplasmic vesicle membrane. It is found in the membrane raft. Its subcellular location is the lysosome. It localises to the late endosome. The protein localises to the early endosome. The protein resides in the recycling endosome. It is found in the cell projection. Its subcellular location is the axon. It localises to the dendrite. The enzyme catalyses Broad endopeptidase specificity. Cleaves Glu-Val-Asn-Leu-|-Asp-Ala-Glu-Phe in the Swedish variant of Alzheimer's amyloid precursor protein.. Inhibited by RTN3 and RTN4. Responsible for the proteolytic processing of the amyloid precursor protein (APP). Cleaves at the N-terminus of the A-beta peptide sequence, between residues 671 and 672 of APP, leads to the generation and extracellular release of beta-cleaved soluble APP, and a corresponding cell-associated C-terminal fragment which is later released by gamma-secretase. Cleaves CHL1. In Cavia porcellus (Guinea pig), this protein is Beta-secretase 1 (BACE1).